The primary structure comprises 460 residues: Tyrosine phenol-lyase (460 aa).

The residue at position 260 (K260) is an N6-(pyridoxal phosphate)lysine.

The protein belongs to the beta-eliminating lyase family. As to quaternary structure, homotetramer. Pyridoxal 5'-phosphate serves as cofactor.

The enzyme catalyses L-tyrosine + H2O = phenol + pyruvate + NH4(+). This is Tyrosine phenol-lyase from Fusobacterium nucleatum subsp. nucleatum (strain ATCC 25586 / DSM 15643 / BCRC 10681 / CIP 101130 / JCM 8532 / KCTC 2640 / LMG 13131 / VPI 4355).